The primary structure comprises 437 residues: Anhydromevalonate phosphate decarboxylase (437 aa).

Mn(2+) contacts are provided by N136 and E199. The Proton acceptor role is filled by D247.

The protein belongs to the UbiD family. Prenylated FMN serves as cofactor. The cofactor is Mn(2+).

The catalysed reaction is (2E)-3-methyl-5-phosphooxypent-2-enoate + H(+) = isopentenyl phosphate + CO2. Its pathway is isoprenoid biosynthesis; isopentenyl diphosphate biosynthesis via mevalonate pathway. Its function is as follows. Catalyzes the conversion of trans-anhydromevalonate 5-phosphate (tAHMP) into isopentenyl phosphate. Involved in the archaeal mevalonate (MVA) pathway, which provides fundamental precursors for isoprenoid biosynthesis, such as isopentenyl diphosphate (IPP) and dimethylallyl diphosphate (DMAPP). The polypeptide is Anhydromevalonate phosphate decarboxylase (Aeropyrum pernix (strain ATCC 700893 / DSM 11879 / JCM 9820 / NBRC 100138 / K1)).